The primary structure comprises 274 residues: UPF0758 protein RHECIAT_CH0001935 (274 aa).

Residues 1 to 57 (MAKRPAATSSNDELPFATEEPVADERSFFGGRPQNPTAPNARAALPASLSGPEHYHG) form a disordered region. One can recognise an MPN domain in the interval 152–274 (VLSSWSSVIQ…HVSLKGLKLI (123 aa)). Zn(2+) contacts are provided by histidine 223, histidine 225, and aspartate 236. Positions 223-236 (HNHPSGDPTPSRAD) match the JAMM motif motif.

Belongs to the UPF0758 family.

This Rhizobium etli (strain CIAT 652) protein is UPF0758 protein RHECIAT_CH0001935.